A 501-amino-acid polypeptide reads, in one-letter code: Putative antiporter subunit mnhD2 (501 aa).

The next 14 helical transmembrane spans lie at 4 to 24 (SNLL…LVFI), 33 to 53 (IFSI…LIYV), 79 to 99 (LSLL…AYGF), 109 to 129 (YYLP…FLTA), 131 to 151 (LFNI…LITL), 162 to 182 (IIYV…VGLL), 207 to 227 (IVIV…LVLF), 245 to 265 (FAAL…TLIF), 274 to 294 (PLLV…VLAY), 309 to 329 (IGFI…GAIF), 334 to 354 (DIVV…ITGL), 369 to 389 (FFGV…PFSG), 409 to 429 (LALM…IFFV), and 452 to 472 (NLIG…PLLF).

Belongs to the CPA3 antiporters (TC 2.A.63) subunit D family. As to quaternary structure, may form a heterooligomeric complex that consists of seven subunits: mnhA2, mnhB2, mnhC2, mnhD2, mnhE2, mnhF2 and mnhG2.

It localises to the cell membrane. The protein is Putative antiporter subunit mnhD2 (mnhD2) of Staphylococcus saprophyticus subsp. saprophyticus (strain ATCC 15305 / DSM 20229 / NCIMB 8711 / NCTC 7292 / S-41).